The chain runs to 428 residues: tRNA(Ile2) 2-agmatinylcytidine synthetase TiaS (428 aa).

The protein belongs to the TiaS family.

The protein resides in the cytoplasm. It catalyses the reaction cytidine(34) in tRNA(Ile2) + agmatine + ATP + H2O = 2-agmatinylcytidine(34) in tRNA(Ile2) + AMP + 2 phosphate + 2 H(+). Functionally, ATP-dependent agmatine transferase that catalyzes the formation of 2-agmatinylcytidine (agm2C) at the wobble position (C34) of tRNA(Ile2), converting the codon specificity from AUG to AUA. In Methanosarcina acetivorans (strain ATCC 35395 / DSM 2834 / JCM 12185 / C2A), this protein is tRNA(Ile2) 2-agmatinylcytidine synthetase TiaS.